The following is a 61-amino-acid chain: Small ribosomal subunit protein uS14 (61 aa).

Zn(2+)-binding residues include cysteine 24, cysteine 27, cysteine 40, and cysteine 43.

Belongs to the universal ribosomal protein uS14 family. Zinc-binding uS14 subfamily. In terms of assembly, part of the 30S ribosomal subunit. Contacts proteins S3 and S10. Zn(2+) is required as a cofactor.

Its function is as follows. Binds 16S rRNA, required for the assembly of 30S particles and may also be responsible for determining the conformation of the 16S rRNA at the A site. This Geobacter metallireducens (strain ATCC 53774 / DSM 7210 / GS-15) protein is Small ribosomal subunit protein uS14.